The chain runs to 833 residues: Glycerol-3-phosphate acyltransferase (833 aa).

An HXXXXD motif motif is present at residues 310-315 (HRSHID).

Belongs to the GPAT/DAPAT family.

The protein localises to the cell inner membrane. The catalysed reaction is sn-glycerol 3-phosphate + an acyl-CoA = a 1-acyl-sn-glycero-3-phosphate + CoA. It functions in the pathway phospholipid metabolism; CDP-diacylglycerol biosynthesis; CDP-diacylglycerol from sn-glycerol 3-phosphate: step 1/3. This Pseudomonas syringae pv. tomato (strain ATCC BAA-871 / DC3000) protein is Glycerol-3-phosphate acyltransferase.